Here is a 548-residue protein sequence, read N- to C-terminus: MRILGIEGTAWAASASVFETPDPARVTDDDHVFIETDAYAPDSGGIHPREAAEHMGEAIPTVVETAIEHTHGRAGRDGDDSAPIDAVAFARGPGLGPCLRIVATAARAVAQRFDVPLVGVNHMVAHLEVGRHRSGFDSPVCLNASGANAHILGYRNGRYRVLGETMDTGVGNAIDKFTRHIGWSHPGGPKVEQHARDGEYHELPYVVKGMDFSFSGIMSAAKQAVDDGVPVENVCRGMEETIFAMLTEVSERALSLTGADELVLGGGVGQNARLQRMLGEMCEQREAEFYAPENRFLRDNAGMIAMLGAKMYAAGDTIAIEDSRIDSNFRPDEVAVTWRGPEESVDSYRMGGDEVQGAEATVHFDGDRVIKVRVPRSYRHPTLDERLRTERTRQEARLTSEARRNGVPTPLVRDVDPQESRIVFQRVGDTDLREGLSEGRVADVGRWLARIHDAGFVHGDPTTRNVRVGGRDEQADRTTLIDFGLGYYTQEAEDHAMDLHVLAQSLAGTADDPETLLSAAEDAYRTESDHADAVFASLDDIEGRGRYQ.

The segment at 1–338 (MRILGIEGTA…FRPDEVAVTW (338 aa)) is kae1. Fe cation-binding residues include H122 and H126. Residues 143 to 147 (NASGA), D175, G188, E192, and N271 contribute to the L-threonylcarbamoyladenylate site. Residue D299 participates in Fe cation binding. One can recognise a Protein kinase domain in the interval 349 to 548 (RMGGDEVQGA…DDIEGRGRYQ (200 aa)). Residues 355-362 (VQGAEATV) and K371 contribute to the ATP site. Positions 390 to 404 (ERTRQEARLTSEARR) are enriched in basic and acidic residues. The segment at 390-413 (ERTRQEARLTSEARRNGVPTPLVR) is disordered. The Proton acceptor; for kinase activity role is filled by D460.

The protein in the N-terminal section; belongs to the KAE1 / TsaD family. In the C-terminal section; belongs to the protein kinase superfamily. Tyr protein kinase family. BUD32 subfamily. In terms of assembly, component of the KEOPS complex that consists of Kae1, Bud32, Cgi121 and Pcc1; the whole complex dimerizes. Fe(2+) is required as a cofactor.

Its subcellular location is the cytoplasm. It catalyses the reaction L-seryl-[protein] + ATP = O-phospho-L-seryl-[protein] + ADP + H(+). It carries out the reaction L-threonyl-[protein] + ATP = O-phospho-L-threonyl-[protein] + ADP + H(+). The enzyme catalyses L-threonylcarbamoyladenylate + adenosine(37) in tRNA = N(6)-L-threonylcarbamoyladenosine(37) in tRNA + AMP + H(+). In terms of biological role, required for the formation of a threonylcarbamoyl group on adenosine at position 37 (t(6)A37) in tRNAs that read codons beginning with adenine. Is a component of the KEOPS complex that is probably involved in the transfer of the threonylcarbamoyl moiety of threonylcarbamoyl-AMP (TC-AMP) to the N6 group of A37. The Kae1 domain likely plays a direct catalytic role in this reaction. The Bud32 domain probably displays kinase activity that regulates Kae1 function. The polypeptide is Probable bifunctional tRNA threonylcarbamoyladenosine biosynthesis protein (Haloarcula marismortui (strain ATCC 43049 / DSM 3752 / JCM 8966 / VKM B-1809) (Halobacterium marismortui)).